A 197-amino-acid chain; its full sequence is MAVIPMVVEQTSKGERSYDIYSRLLKERIIFLNGEVEDHMANLIVAQLLFLEAEDPEKDIYLYINSPGGVVTAGLAIYDTMNFIKPDVATLCTGQACSMGAFLLSGGKKGKRFALPNARVMIHQPLGGARGQATDIQIQAQEILKLKEMLTRKMAEHSGQTFAKVAADTERDNFMSATEAKNYGLIDKVLTSRGEVA.

Residue Ser-98 is the Nucleophile of the active site. His-123 is a catalytic residue.

This sequence belongs to the peptidase S14 family. In terms of assembly, fourteen ClpP subunits assemble into 2 heptameric rings which stack back to back to give a disk-like structure with a central cavity, resembling the structure of eukaryotic proteasomes.

The protein resides in the cytoplasm. It catalyses the reaction Hydrolysis of proteins to small peptides in the presence of ATP and magnesium. alpha-casein is the usual test substrate. In the absence of ATP, only oligopeptides shorter than five residues are hydrolyzed (such as succinyl-Leu-Tyr-|-NHMec, and Leu-Tyr-Leu-|-Tyr-Trp, in which cleavage of the -Tyr-|-Leu- and -Tyr-|-Trp bonds also occurs).. Functionally, cleaves peptides in various proteins in a process that requires ATP hydrolysis. Has a chymotrypsin-like activity. Plays a major role in the degradation of misfolded proteins. The sequence is that of ATP-dependent Clp protease proteolytic subunit from Haemophilus ducreyi (strain 35000HP / ATCC 700724).